The primary structure comprises 100 residues: NADH-quinone oxidoreductase subunit K (100 aa).

3 consecutive transmembrane segments (helical) span residues 4 to 24, 28 to 48, and 60 to 80; these read MQHG…GLLI, LIFM…AWVV, and IFYL…LALL.

Belongs to the complex I subunit 4L family. In terms of assembly, NDH-1 is composed of 13 different subunits. Subunits NuoA, H, J, K, L, M, N constitute the membrane sector of the complex.

It is found in the cell membrane. The enzyme catalyses a quinone + NADH + 5 H(+)(in) = a quinol + NAD(+) + 4 H(+)(out). NDH-1 shuttles electrons from NADH, via FMN and iron-sulfur (Fe-S) centers, to quinones in the respiratory chain. The immediate electron acceptor for the enzyme in this species is believed to be ubiquinone. Couples the redox reaction to proton translocation (for every two electrons transferred, four hydrogen ions are translocated across the cytoplasmic membrane), and thus conserves the redox energy in a proton gradient. The chain is NADH-quinone oxidoreductase subunit K from Hamiltonella defensa subsp. Acyrthosiphon pisum (strain 5AT).